The sequence spans 235 residues: Large ribosomal subunit protein bL25 (235 aa).

Disordered stretches follow at residues 1-21 and 210-235; these read MADNIINAQRREEKGKGPARR and APAAGAAPAAGGEAAKKAPEAKGAKK. The segment covering 210-222 has biased composition (low complexity); the sequence is APAAGAAPAAGGE. Residues 223 to 235 are compositionally biased toward basic and acidic residues; the sequence is AAKKAPEAKGAKK.

Belongs to the bacterial ribosomal protein bL25 family. CTC subfamily. Part of the 50S ribosomal subunit; part of the 5S rRNA/L5/L18/L25 subcomplex. Contacts the 5S rRNA. Binds to the 5S rRNA independently of L5 and L18.

Functionally, this is one of the proteins that binds to the 5S RNA in the ribosome where it forms part of the central protuberance. This chain is Large ribosomal subunit protein bL25, found in Anaeromyxobacter sp. (strain Fw109-5).